The sequence spans 140 residues: Profilin-1 (140 aa).

A2 is subject to N-acetylalanine. S28 carries the post-translational modification Phosphoserine. K54 is covalently cross-linked (Glycyl lysine isopeptide (Lys-Gly) (interchain with G-Cter in SUMO2); alternate). K54 participates in a covalent cross-link: Glycyl lysine isopeptide (Lys-Gly) (interchain with G-Cter in ubiquitin); alternate. A Phosphoserine modification is found at S57. Position 108 is an N6-acetyllysine (K108). Y129 bears the Phosphotyrosine mark. S138 carries the phosphoserine; by ROCK1 modification.

It belongs to the profilin family. Found in a complex with XPO6, Ran, ACTB and PFN1. Interacts with ACTB. Interacts with VASP. Interacts with HTT. Interacts with SH3BGRL. Occurs in many kinds of cells as a complex with monomeric actin in a 1:1 ratio. Interacts with ACTMAP. Phosphorylation at Ser-138 reduces its affinity for G-actin and blocks its interaction with HTT, reducing its ability to inhibit androgen receptor (AR) and HTT aggregation.

The protein localises to the cytoplasm. The protein resides in the cytoskeleton. Binds to actin and affects the structure of the cytoskeleton. At high concentrations, profilin prevents the polymerization of actin, whereas it enhances it at low concentrations. By binding to PIP2, it inhibits the formation of IP3 and DG. Inhibits androgen receptor (AR) and HTT aggregation and binding of G-actin is essential for its inhibition of AR. This Bos taurus (Bovine) protein is Profilin-1 (PFN1).